The primary structure comprises 122 residues: Protein FLORAL ORGAN NUMBER2 (122 aa).

The N-terminal stretch at 1–25 (MGRLFLCLVVAWCWVALLLVAPVHG) is a signal peptide. Residues 28–122 (GLPGEFSGDQ…PEHARSTGRP (95 aa)) form a disordered region. The span at 54–63 (KQPRGVKGTR) shows a compositional bias: basic residues. Residues 64–77 (RPSWSSWSSTASRS) show a composition bias toward low complexity. The segment covering 111–122 (RRPEHARSTGRP) has biased composition (basic and acidic residues).

Belongs to the CLV3/ESR signal peptide family.

The protein localises to the secreted. In terms of biological role, probable extracellular signal that regulates meristem maintenance. May function as a putative ligand for a receptor complex including FON1. Regulates the size of the floral meristem and the number of floral organs. The chain is Protein FLORAL ORGAN NUMBER2 (FON2) from Oryza sativa subsp. indica (Rice).